The chain runs to 314 residues: uncharacterized protein (314 aa).

The N-terminal stretch at 1-18 (MLIQILFLIILTLNCSYS) is a signal peptide. N68, N72, N106, and N256 each carry an N-linked (GlcNAc...) asparagine glycan.

It is found in the secreted. This is an uncharacterized protein from Caenorhabditis elegans.